Consider the following 420-residue polypeptide: D-tagatose-1,6-bisphosphate aldolase subunit GatZ (420 aa).

The protein belongs to the GatZ/KbaZ family. GatZ subfamily. In terms of assembly, forms a complex with GatY.

It functions in the pathway carbohydrate metabolism; D-tagatose 6-phosphate degradation; D-glyceraldehyde 3-phosphate and glycerone phosphate from D-tagatose 6-phosphate: step 2/2. Component of the tagatose-1,6-bisphosphate aldolase GatYZ that is required for full activity and stability of the Y subunit. Could have a chaperone-like function for the proper and stable folding of GatY. When expressed alone, GatZ does not show any aldolase activity. Is involved in the catabolism of galactitol. The protein is D-tagatose-1,6-bisphosphate aldolase subunit GatZ of Shigella boydii serotype 18 (strain CDC 3083-94 / BS512).